The primary structure comprises 65 residues: 7 kDa A-type inclusion protein (65 aa).

Positions Met1–Ala20 are enriched in polar residues. A disordered region spans residues Met1 to Ile32.

In Bos taurus (Bovine), this protein is 7 kDa A-type inclusion protein.